Here is a 459-residue protein sequence, read N- to C-terminus: Bifunctional protein GlmU (459 aa).

A pyrophosphorylase region spans residues 1 to 230 (MVKRYAVILA…FEETIGVNDR (230 aa)). Residues 9-12 (LAAG), K23, Q73, and 78-79 (GT) each bind UDP-N-acetyl-alpha-D-glucosamine. Residue D103 participates in Mg(2+) binding. Residues G140, E155, N170, and N228 each contribute to the UDP-N-acetyl-alpha-D-glucosamine site. N228 provides a ligand contact to Mg(2+). Residues 231–251 (VALAEAEKIMRERICRKHMMN) are linker. Residues 252–459 (GVTIIDPAHT…VDRLSIKKNS (208 aa)) form an N-acetyltransferase region. Residues R333 and K351 each contribute to the UDP-N-acetyl-alpha-D-glucosamine site. H363 acts as the Proton acceptor in catalysis. Positions 366 and 377 each coordinate UDP-N-acetyl-alpha-D-glucosamine. Acetyl-CoA is bound by residues 386–387 (NY), A423, and R440.

It in the N-terminal section; belongs to the N-acetylglucosamine-1-phosphate uridyltransferase family. This sequence in the C-terminal section; belongs to the transferase hexapeptide repeat family. Homotrimer. Requires Mg(2+) as cofactor.

The protein resides in the cytoplasm. It carries out the reaction alpha-D-glucosamine 1-phosphate + acetyl-CoA = N-acetyl-alpha-D-glucosamine 1-phosphate + CoA + H(+). The catalysed reaction is N-acetyl-alpha-D-glucosamine 1-phosphate + UTP + H(+) = UDP-N-acetyl-alpha-D-glucosamine + diphosphate. It functions in the pathway nucleotide-sugar biosynthesis; UDP-N-acetyl-alpha-D-glucosamine biosynthesis; N-acetyl-alpha-D-glucosamine 1-phosphate from alpha-D-glucosamine 6-phosphate (route II): step 2/2. It participates in nucleotide-sugar biosynthesis; UDP-N-acetyl-alpha-D-glucosamine biosynthesis; UDP-N-acetyl-alpha-D-glucosamine from N-acetyl-alpha-D-glucosamine 1-phosphate: step 1/1. The protein operates within bacterial outer membrane biogenesis; LPS lipid A biosynthesis. Its function is as follows. Catalyzes the last two sequential reactions in the de novo biosynthetic pathway for UDP-N-acetylglucosamine (UDP-GlcNAc). The C-terminal domain catalyzes the transfer of acetyl group from acetyl coenzyme A to glucosamine-1-phosphate (GlcN-1-P) to produce N-acetylglucosamine-1-phosphate (GlcNAc-1-P), which is converted into UDP-GlcNAc by the transfer of uridine 5-monophosphate (from uridine 5-triphosphate), a reaction catalyzed by the N-terminal domain. This is Bifunctional protein GlmU from Geobacillus sp. (strain WCH70).